The primary structure comprises 209 residues: Uracil phosphoribosyltransferase (209 aa).

Residues Arg79, Arg104, and 131-139 (DPMLATGAS) contribute to the 5-phospho-alpha-D-ribose 1-diphosphate site. Uracil-binding positions include Ile194 and 199–201 (GDA). A 5-phospho-alpha-D-ribose 1-diphosphate-binding site is contributed by Asp200.

This sequence belongs to the UPRTase family. Mg(2+) is required as a cofactor.

The catalysed reaction is UMP + diphosphate = 5-phospho-alpha-D-ribose 1-diphosphate + uracil. Its pathway is pyrimidine metabolism; UMP biosynthesis via salvage pathway; UMP from uracil: step 1/1. With respect to regulation, allosterically activated by GTP. Catalyzes the conversion of uracil and 5-phospho-alpha-D-ribose 1-diphosphate (PRPP) to UMP and diphosphate. This chain is Uracil phosphoribosyltransferase, found in Staphylococcus epidermidis (strain ATCC 35984 / DSM 28319 / BCRC 17069 / CCUG 31568 / BM 3577 / RP62A).